The primary structure comprises 139 residues: Maximins 4/H3 type 5 (139 aa).

The first 18 residues, Met1–Ala18, serve as a signal peptide directing secretion. Positions Arg19–Arg43 are excised as a propeptide. Asn70 bears the Asparagine amide mark. Positions Thr74–Arg118 are excised as a propeptide. Ile138 carries the post-translational modification Isoleucine amide.

It belongs to the bombinin family. Expressed by the skin glands.

It localises to the secreted. In terms of biological role, maximin-4 shows antibacterial activity against both Gram-positive and Gram-negative bacteria. It also shows antimicrobial activity against the fungus C.albicans, but not against A.flavus nor P.uticale. It has little hemolytic activity. It does not possess a significant cytotoxicity against tumor cell lines. It does not possess a significant anti-HIV activity. Functionally, maximin-H3 shows antibacterial activity against both Gram-positive and Gram-negative bacteria. It also shows antimicrobial activity against the fungus C.albicans. Shows strong hemolytic activity. This is Maximins 4/H3 type 5 from Bombina maxima (Giant fire-bellied toad).